The chain runs to 209 residues: Chaperone protein TorD (209 aa).

The protein belongs to the TorD/DmsD family. TorD subfamily.

It is found in the cytoplasm. Involved in the biogenesis of TorA. Acts on TorA before the insertion of the molybdenum cofactor and, as a result, probably favors a conformation of the apoenzyme that is competent for acquiring the cofactor. The polypeptide is Chaperone protein TorD (Shewanella baltica (strain OS155 / ATCC BAA-1091)).